Reading from the N-terminus, the 880-residue chain is EP-cadherin (880 aa).

The N-terminal stretch at 1–28 (MGSTRLRNASVWLCGLLCLLQVVPSINA) is a signal peptide. The propeptide occupies 29-155 (DVSGCKPGFS…THTGLKRKKR (127 aa)). The N-linked (GlcNAc...) asparagine glycan is linked to Asn61. Cadherin domains lie at 156 to 263 (DWVI…RPKF), 264 to 376 (TQDV…APIF), 377 to 487 (DPKT…APFF), 488 to 593 (VPAV…DNGP), and 594 to 704 (VPSP…GFDL). Residues 156–703 (DWVIPPIKVS…CQEKLVGGFD (548 aa)) lie on the Extracellular side of the membrane. O-linked (GalNAc...) threonine glycans are attached at residues Thr343, Thr382, and Thr400. Asn425 is a glycosylation site (N-linked (GlcNAc...) asparagine). Thr428, Thr469, Thr471, Thr473, and Thr475 each carry an O-linked (GalNAc...) threonine glycan. A glycan (N-linked (GlcNAc...) asparagine) is linked at Asn558. O-linked (GalNAc...) threonine glycans are attached at residues Thr562, Thr576, Thr578, and Thr580. Disulfide bonds link Cys603–Cys687 and Cys685–Cys694. Asn681 is a glycosylation site (N-linked (GlcNAc...) asparagine). The chain crosses the membrane as a helical span at residues 704–728 (LPIILVILGSVLALLILFLLLLLFL). Over 729 to 880 (KRKKVVKEPL…DMYGGDDDEE (152 aa)) the chain is Cytoplasmic. The tract at residues 790-826 (PAPHYRPRPSNPDEIGNFIDENLDAADNDPTAPPYDS) is disordered.

In terms of assembly, interacts with CTNNB1.

It is found in the cell membrane. In terms of biological role, cadherins are calcium-dependent cell adhesion proteins. They preferentially interact with themselves in a homophilic manner in connecting cells; cadherins may thus contribute to the sorting of heterogeneous cell types. This chain is EP-cadherin, found in Xenopus laevis (African clawed frog).